The sequence spans 613 residues: Arginine--tRNA ligase (613 aa).

A 'HIGH' region motif is present at residues 123–133; it reads PNVAKPMHVGH.

The protein belongs to the class-I aminoacyl-tRNA synthetase family. As to quaternary structure, monomer.

It localises to the cytoplasm. The catalysed reaction is tRNA(Arg) + L-arginine + ATP = L-arginyl-tRNA(Arg) + AMP + diphosphate. This chain is Arginine--tRNA ligase, found in Caulobacter sp. (strain K31).